The following is an 868-amino-acid chain: DNA topoisomerase 1 (868 aa).

The 146-residue stretch at 3–148 folds into the Toprim domain; it reads KSLVIVESPA…RFSRVVFNEI (146 aa). Glutamate 9 and aspartate 117 together coordinate Mg(2+). Residues 164–581 form the Topo IA-type catalytic domain; the sequence is NMDRVNAQQT…QFFKDFSSQL (418 aa). An interaction with DNA region spans residues 198–203; sequence SAGRVQ. The active-site O-(5'-phospho-DNA)-tyrosine intermediate is the tyrosine 325. 3 C4-type zinc fingers span residues 605-636, 667-694, and 716-739; these read CPTCGRNMAIRTASTGVFLGCTGYALPPKERC, CTKCGTAMDSYVIDAHRKIHICGNNPNC, and CDKCGADMHLKLGRFGKYMGCTNC.

The protein belongs to the type IA topoisomerase family. In terms of assembly, monomer. Requires Mg(2+) as cofactor.

It carries out the reaction ATP-independent breakage of single-stranded DNA, followed by passage and rejoining.. In terms of biological role, releases the supercoiling and torsional tension of DNA, which is introduced during the DNA replication and transcription, by transiently cleaving and rejoining one strand of the DNA duplex. Introduces a single-strand break via transesterification at a target site in duplex DNA. The scissile phosphodiester is attacked by the catalytic tyrosine of the enzyme, resulting in the formation of a DNA-(5'-phosphotyrosyl)-enzyme intermediate and the expulsion of a 3'-OH DNA strand. The free DNA strand then undergoes passage around the unbroken strand, thus removing DNA supercoils. Finally, in the religation step, the DNA 3'-OH attacks the covalent intermediate to expel the active-site tyrosine and restore the DNA phosphodiester backbone. The protein is DNA topoisomerase 1 of Haemophilus influenzae (strain ATCC 51907 / DSM 11121 / KW20 / Rd).